The chain runs to 434 residues: BEN domain-containing protein 7 (434 aa).

Glycyl lysine isopeptide (Lys-Gly) (interchain with G-Cter in SUMO2) cross-links involve residues lysine 16, lysine 56, and lysine 85. Disordered regions lie at residues 96-151 and 212-262; these read PQRS…SNGE and SRKR…ERTS. Over residues 97 to 150 the composition is skewed to polar residues; that stretch reads QRSNSSTEASQGLHSNSRGAWNELPTQSGQFSGQSGPRSRTFQTQPHISASSNG. A compositionally biased stretch (basic residues) spans 212–222; sequence SRKRNKKKKVL. Lysine 244 is covalently cross-linked (Glycyl lysine isopeptide (Lys-Gly) (interchain with G-Cter in SUMO2)). The region spanning 289–399 is the BEN domain; sequence GFDVFMPKSQ…RRLKRGSAEV (111 aa). Residue threonine 326 is modified to Phosphothreonine. Position 330 is a phosphoserine (serine 330). Positions 414 to 434 are disordered; sequence TGHTFVIKRETPEDPEPGSVA.

This is BEN domain-containing protein 7 (Bend7) from Mus musculus (Mouse).